Consider the following 719-residue polypeptide: Solute carrier family 15 member 2 (719 aa).

Residues 1-43 (MGKMKDKDVDAEKYEKAQRSPKLCGTNYPVSIAFIVVNEFCER) are Cytoplasmic-facing. The chain crosses the membrane as a helical span at residues 44–61 (FSYYGMKAVLTLYFMNYL). The Extracellular portion of the chain corresponds to 62–69 (HWDKNLST). Asn66 carries an N-linked (GlcNAc...) asparagine glycan. A helical membrane pass occupies residues 70–90 (AIYHAFSGLCYFTPLLGALIA). Residues 91–99 (DSWLGKFKT) lie on the Cytoplasmic side of the membrane. Residues 100 to 120 (IIYLSIVYVIGHVVKSVGAIP) traverse the membrane as a helical segment. The Extracellular portion of the chain corresponds to 121-125 (DVGDS). A helical transmembrane segment spans residues 126 to 146 (TVHIALSMVGLGLIALGTGGI). Residues 147-169 (KPCVAAFGGDQFDEDNIDERRKF) lie on the Cytoplasmic side of the membrane. The chain crosses the membrane as a helical span at residues 170-190 (FSIFYMSINAGSVLSTIITPI). Topologically, residues 191 to 201 (LRGDVQCFGGD) are extracellular. Residues 202-222 (CYALAFGVPAALMVIALVVFI) form a helical membrane-spanning segment. The Cytoplasmic portion of the chain corresponds to 223–280 (SGSGLYKKSPPEGNVLVRVCKCIGFAISNRWTNSKKSPKRSHWLDWAEEKYSKRLIQE). A helical transmembrane segment spans residues 281–301 (IKMVCRVLVLYIPLPMFWALF). The Extracellular segment spans residues 302–334 (DQQGSRWTLQATRMNMDFGGGFIIKPDQMQMLN). A helical membrane pass occupies residues 335–355 (ALLILVFIPIFDMGIYPLVGL). The Cytoplasmic portion of the chain corresponds to 356–367 (CRIKLTPLKKMA). Residues 368-388 (TGMILAALAFCAATAVEVYVI) traverse the membrane as a helical segment. Over 389 to 594 (KTVVEPPPAK…QANNIHIGWQ (206 aa)) the chain is Extracellular. Residues 389 to 594 (KTVVEPPPAK…QANNIHIGWQ (206 aa)) form an extracellular domain (ECD) region. N-linked (GlcNAc...) asparagine glycans are attached at residues Asn481, Asn513, and Asn532. Residues 595-615 (IPQYVFLTAGEVMFSITGLEF) form a helical membrane-spanning segment. At 616–626 (SYSQAPASMKS) the chain is on the cytoplasmic side. A helical transmembrane segment spans residues 627 to 647 (VLQAGWLMTVAFGNVIVLIVA). Residues 648–657 (EGAGMEQWVE) are Extracellular-facing. Residues 658 to 678 (FLLFAALLVAVSIIFSIMAYF) form a helical membrane-spanning segment. Topologically, residues 679–719 (YTYVDPDQLDKLFKEDGDGGKVESSKKDELSLGDMPKQTKM) are cytoplasmic. Basic and acidic residues predominate over residues 695–708 (GDGGKVESSKKDEL). The segment at 695–719 (GDGGKVESSKKDELSLGDMPKQTKM) is disordered.

It belongs to the major facilitator superfamily. Proton-dependent oligopeptide transporter (POT/PTR) (TC 2.A.17) family. Expressed in kidney, brain and gut. Also expressed weakly in eye, gill and skeletal muscle.

The protein localises to the apical cell membrane. It is found in the cytoplasmic vesicle. Its subcellular location is the phagosome membrane. It localises to the cell membrane. The enzyme catalyses a dipeptide(out) + 2 H(+)(out) = a dipeptide(in) + 2 H(+)(in). The catalysed reaction is N-acetyl-D-muramoyl-L-alanyl-D-isoglutamine(out) + 3 H(+)(out) = N-acetyl-D-muramoyl-L-alanyl-D-isoglutamine(in) + 3 H(+)(in). It catalyses the reaction glycyl-L-leucine(out) + 2 H(+)(out) = glycyl-L-leucine(in) + 2 H(+)(in). It carries out the reaction glycyl-L-lysine(out) + 2 H(+)(out) = glycyl-L-lysine(in) + 2 H(+)(in). The enzyme catalyses glycyl-L-glutamate(out) + 3 H(+)(out) = glycyl-L-glutamate(in) + 3 H(+)(in). The catalysed reaction is L-alanyl-L-alanine(out) + 2 H(+)(out) = L-alanyl-L-alanine(in) + 2 H(+)(in). It catalyses the reaction an L-amino acid tripeptide(out) + 2 H(+)(out) = an L-amino acid tripeptide(in) + 2 H(+)(in). It carries out the reaction carnosine(out) + 2 H(+)(out) = carnosine(in) + 2 H(+)(in). Proton-coupled amino-acid transporter that transports oligopeptides of 2 to 4 amino acids with a preference for dipeptides. Transports neutral and anionic dipeptides with a proton to peptide stoichiometry of 2:1 or 3:1. The chain is Solute carrier family 15 member 2 from Danio rerio (Zebrafish).